We begin with the raw amino-acid sequence, 551 residues long: Periplasmic [NiFe] hydrogenase large subunit (551 aa).

The Ni(2+) site is built by Cys-65, Cys-68, Cys-530, and Cys-533. Positions 537–551 are excised as a propeptide; sequence VIDPESNQVHKFRIL.

It belongs to the [NiFe]/[NiFeSe] hydrogenase large subunit family. As to quaternary structure, heterodimer of a large and a small subunit. Ni(2+) serves as cofactor.

It is found in the periplasm. It catalyses the reaction 2 Fe(III)-[cytochrome c3] + H2 = 2 Fe(II)-[cytochrome c3] + 2 H(+). This chain is Periplasmic [NiFe] hydrogenase large subunit (hydB), found in Megalodesulfovibrio gigas (Desulfovibrio gigas).